A 380-amino-acid polypeptide reads, in one-letter code: Tryptophan 2,3-dioxygenase (380 aa).

Residues 57-61 and Arg128 contribute to the substrate site; that span reads FIITH. His313 provides a ligand contact to heme. Thr328 lines the substrate pocket.

It belongs to the tryptophan 2,3-dioxygenase family. As to quaternary structure, homotetramer. Dimer of dimers. Requires heme as cofactor.

It carries out the reaction L-tryptophan + O2 = N-formyl-L-kynurenine. Its pathway is amino-acid degradation; L-tryptophan degradation via kynurenine pathway; L-kynurenine from L-tryptophan: step 1/2. It participates in pigment biosynthesis; ommochrome biosynthesis. Heme-dependent dioxygenase that catalyzes the oxidative cleavage of the L-tryptophan (L-Trp) pyrrole ring and converts L-tryptophan to N-formyl-L-kynurenine. Catalyzes the oxidative cleavage of the indole moiety. In Drosophila persimilis (Fruit fly), this protein is Tryptophan 2,3-dioxygenase.